A 63-amino-acid chain; its full sequence is Adipokinetic prohormone type 1 (63 aa).

The first 22 residues, methionine 1 to alanine 22, serve as a signal peptide directing secretion. Position 23 is a pyrrolidone carboxylic acid (glutamine 23). Threonine 32 bears the Threonine amide mark.

It belongs to the AKH/HRTH/RPCH family. Adipokinetic hormone precursor-related peptide (APRP) can form three type of disulfide-bond dimers: p1 (alpha-alpha), p2 (alpha-beta), and p3 (beta-beta).

The protein localises to the secreted. This hormone, released from cells in the corpora cardiaca, causes release of diglycerides from the fat body and stimulation of muscles to use these diglycerides as an energy source during energy-demanding processes. The protein is Adipokinetic prohormone type 1 of Schistocerca nitens (Vagrant locust).